The chain runs to 244 residues: Probable transcriptional regulatory protein Dgeo_2194 (244 aa).

The interval 1–21 (MAGHSKWAQIKRKKGANDKKR) is disordered.

Belongs to the TACO1 family.

The protein resides in the cytoplasm. This Deinococcus geothermalis (strain DSM 11300 / CIP 105573 / AG-3a) protein is Probable transcriptional regulatory protein Dgeo_2194.